The sequence spans 344 residues: Phosphoribosylformylglycinamidine cyclo-ligase (344 aa).

It belongs to the AIR synthase family.

The protein resides in the cytoplasm. The enzyme catalyses 2-formamido-N(1)-(5-O-phospho-beta-D-ribosyl)acetamidine + ATP = 5-amino-1-(5-phospho-beta-D-ribosyl)imidazole + ADP + phosphate + H(+). It functions in the pathway purine metabolism; IMP biosynthesis via de novo pathway; 5-amino-1-(5-phospho-D-ribosyl)imidazole from N(2)-formyl-N(1)-(5-phospho-D-ribosyl)glycinamide: step 2/2. This chain is Phosphoribosylformylglycinamidine cyclo-ligase, found in Synechococcus sp. (strain RCC307).